Here is a 126-residue protein sequence, read N- to C-terminus: Small ribosomal subunit protein eS24 (126 aa).

Positions 98 to 126 (LYTKPQTSRKQRKEKKNRLKKAGKKTAKK) are disordered. Residues 104–126 (TSRKQRKEKKNRLKKAGKKTAKK) show a composition bias toward basic residues.

This sequence belongs to the eukaryotic ribosomal protein eS24 family.

This Dictyostelium discoideum (Social amoeba) protein is Small ribosomal subunit protein eS24 (rps24).